The sequence spans 174 residues: CEN-like protein 1 (174 aa).

It belongs to the phosphatidylethanolamine-binding protein family. As to expression, expressed in vegetative axillary meristems but not in the main shoot meristem.

It localises to the cytoplasm. In terms of biological role, may form complexes with phosphorylated ligands by interfering with kinases and their effectors. The polypeptide is CEN-like protein 1 (CET1) (Nicotiana tabacum (Common tobacco)).